Here is a 187-residue protein sequence, read N- to C-terminus: Large ribosomal subunit protein uL5 (187 aa).

The protein belongs to the universal ribosomal protein uL5 family. As to quaternary structure, part of the 50S ribosomal subunit; part of the 5S rRNA/L5/L18/L25 subcomplex. Contacts the 5S rRNA and the P site tRNA. Forms a bridge to the 30S subunit in the 70S ribosome.

This is one of the proteins that bind and probably mediate the attachment of the 5S RNA into the large ribosomal subunit, where it forms part of the central protuberance. In the 70S ribosome it contacts protein S13 of the 30S subunit (bridge B1b), connecting the 2 subunits; this bridge is implicated in subunit movement. Contacts the P site tRNA; the 5S rRNA and some of its associated proteins might help stabilize positioning of ribosome-bound tRNAs. The polypeptide is Large ribosomal subunit protein uL5 (Dinoroseobacter shibae (strain DSM 16493 / NCIMB 14021 / DFL 12)).